The sequence spans 184 residues: Latex serine proteinase inhibitor (184 aa).

C45 and C89 form a disulfide bridge. N84 and N90 each carry an N-linked (GlcNAc...) asparagine glycan. A disulfide bridge connects residues C142 and C153.

The protein belongs to the protease inhibitor I3 (leguminous Kunitz-type inhibitor) family.

The protein resides in the secreted. The protein localises to the extracellular space. In Carica papaya (Papaya), this protein is Latex serine proteinase inhibitor.